A 408-amino-acid polypeptide reads, in one-letter code: Imidazolonepropionase (408 aa).

Fe(3+) contacts are provided by histidine 73 and histidine 75. Histidine 73 and histidine 75 together coordinate Zn(2+). 4-imidazolone-5-propanoate-binding residues include arginine 82, tyrosine 145, and histidine 178. Tyrosine 145 provides a ligand contact to N-formimidoyl-L-glutamate. Fe(3+) is bound at residue histidine 243. Histidine 243 serves as a coordination point for Zn(2+). Glutamine 246 contacts 4-imidazolone-5-propanoate. A Fe(3+)-binding site is contributed by aspartate 318. A Zn(2+)-binding site is contributed by aspartate 318. Asparagine 320 and glycine 322 together coordinate N-formimidoyl-L-glutamate. Serine 323 serves as a coordination point for 4-imidazolone-5-propanoate.

Belongs to the metallo-dependent hydrolases superfamily. HutI family. It depends on Zn(2+) as a cofactor. Requires Fe(3+) as cofactor.

Its subcellular location is the cytoplasm. The catalysed reaction is 4-imidazolone-5-propanoate + H2O = N-formimidoyl-L-glutamate. Its pathway is amino-acid degradation; L-histidine degradation into L-glutamate; N-formimidoyl-L-glutamate from L-histidine: step 3/3. In terms of biological role, catalyzes the hydrolytic cleavage of the carbon-nitrogen bond in imidazolone-5-propanoate to yield N-formimidoyl-L-glutamate. It is the third step in the universal histidine degradation pathway. The sequence is that of Imidazolonepropionase from Shewanella sp. (strain MR-4).